Here is a 376-residue protein sequence, read N- to C-terminus: Protein STRICTOSIDINE SYNTHASE-LIKE 2 (376 aa).

Positions 1–23 (MMKLLLVVATSVALIFSVTDLSG) are cleaved as a signal peptide. 2 N-linked (GlcNAc...) asparagine glycosylation sites follow: asparagine 79 and asparagine 244.

Belongs to the strictosidine synthase family.

It localises to the vacuole. In Arabidopsis thaliana (Mouse-ear cress), this protein is Protein STRICTOSIDINE SYNTHASE-LIKE 2.